The primary structure comprises 198 residues: Holliday junction branch migration complex subunit RuvA (198 aa).

Positions 1–63 are domain I; the sequence is MYDYIKGQLT…EDAQLLFGFH (63 aa). The domain II stretch occupies residues 64 to 142; sequence SEEEKDVFLK…EAPKEESSKP (79 aa). A flexible linker region spans residues 143-147; it reads PKAKQ. A domain III region spans residues 148–198; it reads QGNEQLDEAVEALLALGYKATELKKIRAFFEGTSETAEQYIKSALKMLMKG.

It belongs to the RuvA family. As to quaternary structure, homotetramer. Forms an RuvA(8)-RuvB(12)-Holliday junction (HJ) complex. HJ DNA is sandwiched between 2 RuvA tetramers; dsDNA enters through RuvA and exits via RuvB. An RuvB hexamer assembles on each DNA strand where it exits the tetramer. Each RuvB hexamer is contacted by two RuvA subunits (via domain III) on 2 adjacent RuvB subunits; this complex drives branch migration. In the full resolvosome a probable DNA-RuvA(4)-RuvB(12)-RuvC(2) complex forms which resolves the HJ.

The protein resides in the cytoplasm. Its function is as follows. The RuvA-RuvB-RuvC complex processes Holliday junction (HJ) DNA during genetic recombination and DNA repair, while the RuvA-RuvB complex plays an important role in the rescue of blocked DNA replication forks via replication fork reversal (RFR). RuvA specifically binds to HJ cruciform DNA, conferring on it an open structure. The RuvB hexamer acts as an ATP-dependent pump, pulling dsDNA into and through the RuvAB complex. HJ branch migration allows RuvC to scan DNA until it finds its consensus sequence, where it cleaves and resolves the cruciform DNA. This is Holliday junction branch migration complex subunit RuvA from Streptococcus equi subsp. zooepidemicus (strain H70).